Here is a 266-residue protein sequence, read N- to C-terminus: Apoptosis regulator ced-9 (266 aa).

Residues 1–58 (MVDSMDMANSSQNTFRRRTMATSEMREFLSTKDAEPNNFGMQTIPESPTPSTPTRRMS) are disordered. The segment covering 24-35 (EMREFLSTKDAE) has biased composition (basic and acidic residues). The BH4 motif lies at 75-94 (IQGFVVDYFTYRIAQNGLDW). The BH1 signature appears at 156–174 (NTPCPMSYGRLIGLISFGG). The BH2 signature appears at 208–223 (SWKEHNRSWADFMKLG).

The protein belongs to the Bcl-2 family. In terms of assembly, interacts with asymmetric homodimer ced-4; the interaction sequesters ced-4. Interacts with egl-1; the interaction results in ced-4 release. Interacts with dre-1; the interaction inhibits ced-9 activity, either directly or indirectly. Interacts with dct-1. May form a complex composed of ced-9, ced-4 and mac-1.

Its subcellular location is the perikaryon. The protein localises to the synapse. It localises to the endomembrane system. It is found in the mitochondrion membrane. Functionally, plays a major role in programmed cell death (PCD, apoptosis). egl-1 binds to and directly inhibits the activity of ced-9, releasing the cell death activator ced-4 from a ced-9/ced-4 containing protein complex and allowing ced-4 to activate the cell-killing caspase ced-3. During larval development, required for the elimination of transient presynaptic components downstream of egl-1 and upstream of ced-4 and ced-3 apoptotic pathway. This chain is Apoptosis regulator ced-9 (ced-9), found in Caenorhabditis briggsae.